A 275-amino-acid polypeptide reads, in one-letter code: Shikimate dehydrogenase (NADP(+)) (275 aa).

Shikimate-binding positions include 19–21 and Thr66; that span reads SKS. Lys70 (proton acceptor) is an active-site residue. Glu82 is a binding site for NADP(+). Residues Asn91 and Asp106 each coordinate shikimate. Residues 130–134, 154–159, and Met217 contribute to the NADP(+) site; these read GAGGA and NRTASK. Tyr219 contributes to the shikimate binding site. Gly241 provides a ligand contact to NADP(+).

This sequence belongs to the shikimate dehydrogenase family. In terms of assembly, homodimer.

It carries out the reaction shikimate + NADP(+) = 3-dehydroshikimate + NADPH + H(+). It functions in the pathway metabolic intermediate biosynthesis; chorismate biosynthesis; chorismate from D-erythrose 4-phosphate and phosphoenolpyruvate: step 4/7. Its function is as follows. Involved in the biosynthesis of the chorismate, which leads to the biosynthesis of aromatic amino acids. Catalyzes the reversible NADPH linked reduction of 3-dehydroshikimate (DHSA) to yield shikimate (SA). The sequence is that of Shikimate dehydrogenase (NADP(+)) from Colwellia psychrerythraea (strain 34H / ATCC BAA-681) (Vibrio psychroerythus).